The primary structure comprises 232 residues: CD302 antigen (232 aa).

The first 22 residues, 1–22 (MPRAAPPALLLPLLGLAAAAAA), serve as a signal peptide directing secretion. Over 23-168 (DCPSSTWVQF…YEKKYLSDNR (146 aa)) the chain is Extracellular. Residues 32 to 152 (FQDSCYIFLQ…CEVSSVEGTL (121 aa)) enclose the C-type lectin domain. N-linked (GlcNAc...) asparagine glycosylation occurs at N109. C128 and C143 are joined by a disulfide. A helical transmembrane segment spans residues 169–189 (ILISALVIASTVILTVLGAVV). The Cytoplasmic portion of the chain corresponds to 190–232 (WFLYKRSLDSGFTTVFSAAHQSPYNDDCVLVVAEENEYDIQFN).

The protein localises to the membrane. The protein resides in the cell projection. It is found in the filopodium. It localises to the cytoplasm. Its subcellular location is the cell cortex. The protein localises to the microvillus. Its function is as follows. Potential multifunctional C-type lectin receptor that may play roles in endocytosis and phagocytosis as well as in cell adhesion and migration. This Bos taurus (Bovine) protein is CD302 antigen.